The sequence spans 235 residues: Small ribosomal subunit protein uS5 (235 aa).

Positions 60-123 (ENQEVLDIAL…NYAKMNIIEI (64 aa)) constitute an S5 DRBM domain. Residues Cys-127, Cys-132, Cys-134, and His-138 each coordinate Zn(2+).

It belongs to the universal ribosomal protein uS5 family. In terms of assembly, part of the 30S ribosomal subunit. Contacts protein S4. It depends on Zn(2+) as a cofactor.

Its function is as follows. With S4 and S12 plays an important role in translational accuracy. In Thermococcus kodakarensis (strain ATCC BAA-918 / JCM 12380 / KOD1) (Pyrococcus kodakaraensis (strain KOD1)), this protein is Small ribosomal subunit protein uS5.